The sequence spans 188 residues: F-box only protein 36 (188 aa).

Residues 91–137 (FDYLERLSDRLLLKIICYLDLEDIASLSQTSSKFEKLCKSDLLWEQI) enclose the F-box domain.

As to quaternary structure, directly interacts with SKP1 and CUL1.

Substrate-recognition component of the SCF (SKP1-CUL1-F-box protein)-type E3 ubiquitin ligase complex. This Mus musculus (Mouse) protein is F-box only protein 36 (Fbxo36).